Here is a 315-residue protein sequence, read N- to C-terminus: Aspartate carbamoyltransferase catalytic subunit (315 aa).

Carbamoyl phosphate-binding residues include R65 and T66. K93 provides a ligand contact to L-aspartate. 3 residues coordinate carbamoyl phosphate: R115, H145, and Q148. 2 residues coordinate L-aspartate: R179 and R234. G275 and P276 together coordinate carbamoyl phosphate.

It belongs to the aspartate/ornithine carbamoyltransferase superfamily. ATCase family. Heterododecamer (2C3:3R2) of six catalytic PyrB chains organized as two trimers (C3), and six regulatory PyrI chains organized as three dimers (R2).

It catalyses the reaction carbamoyl phosphate + L-aspartate = N-carbamoyl-L-aspartate + phosphate + H(+). It functions in the pathway pyrimidine metabolism; UMP biosynthesis via de novo pathway; (S)-dihydroorotate from bicarbonate: step 2/3. Functionally, catalyzes the condensation of carbamoyl phosphate and aspartate to form carbamoyl aspartate and inorganic phosphate, the committed step in the de novo pyrimidine nucleotide biosynthesis pathway. The chain is Aspartate carbamoyltransferase catalytic subunit from Xanthomonas campestris pv. campestris (strain 8004).